Here is a 291-residue protein sequence, read N- to C-terminus: 3-hydroxy-5-phosphonooxypentane-2,4-dione thiolase (291 aa).

Lys203 serves as the catalytic Schiff-base intermediate with substrate.

It belongs to the DeoC/FbaB aldolase family. Homodecamer.

It localises to the cytoplasm. It catalyses the reaction dihydroxyacetone phosphate + acetyl-CoA = 3-hydroxy-2,4-dioxopentyl phosphate + CoA. Functionally, involved in the degradation of phospho-AI-2, thereby terminating induction of the lsr operon and closing the AI-2 signaling cycle. Catalyzes the transfer of an acetyl moiety from 3-hydroxy-5-phosphonooxypentane-2,4-dione to CoA to form glycerone phosphate and acetyl-CoA. The protein is 3-hydroxy-5-phosphonooxypentane-2,4-dione thiolase of Escherichia coli (strain K12 / DH10B).